Reading from the N-terminus, the 784-residue chain is Transcriptional activator somA (784 aa).

The LisH domain occupies 43–75; it reads MINNLNTYIYDYFLKRGYHECARALVKDESIKL. Residues 75-84 are compositionally biased toward polar residues; it reads LNTEPPTKTS. Disordered stretches follow at residues 75-122, 212-295, 424-726, and 764-784; these read LNTE…PNLA, GLSQ…SQAL, MMAR…DLSI, and GFDP…GDGL. Over residues 103 to 117 the composition is skewed to basic and acidic residues; that stretch reads DSKDGDKIKIPDDLP. Low complexity predominate over residues 215–233; that stretch reads QQQIAQLQKNQQMHMMQQM. The segment covering 234 to 244 has biased composition (basic and acidic residues); that stretch reads QREHSDMDMNG. Residues 247 to 259 are compositionally biased toward low complexity; that stretch reads PQSPSSAENAPSP. The segment covering 453 to 467 has biased composition (polar residues); sequence SPQGSRAGTSPNPNE. Residues 564–592 are compositionally biased toward low complexity; sequence QQQQGQPMGPQQSPAQQPQSTGTPQTQNS. The segment covering 607–624 has biased composition (polar residues); that stretch reads RTSPQSQNAAPPTPQQAN. Residues 629–638 show a composition bias toward basic and acidic residues; sequence KKREPKDTAR. 2 stretches are compositionally biased toward low complexity: residues 644–661 and 691–701; these read KQPA…TPSS and PTTSAPQQPTS. The segment covering 702–715 has biased composition (pro residues); sequence APAPQPIVQQPPPD.

This sequence belongs to the FLO8 family. Interacts with ptaB.

Its subcellular location is the nucleus. Its function is as follows. Transcription factor that controls the expression of genes related to the process of conidiation and adherence and regulates biofilm formation. Controls conidiation and adhesion primarily by affecting the expression of the three regulatory genes flbB, stuA and medA. Required for virulence in an egg and a mouse infection model. This is Transcriptional activator somA from Aspergillus fumigatus (strain ATCC MYA-4609 / CBS 101355 / FGSC A1100 / Af293) (Neosartorya fumigata).